We begin with the raw amino-acid sequence, 236 residues long: LHFPL tetraspan subfamily member 3 protein (236 aa).

Helical transmembrane passes span 36–56 (IGVL…VCFI), 110–130 (FFIG…TLFF), 140–160 (ICAW…MIFP), and 191–211 (ILAI…FVLG).

This sequence belongs to the LHFP family.

It localises to the membrane. This Homo sapiens (Human) protein is LHFPL tetraspan subfamily member 3 protein.